Reading from the N-terminus, the 1608-residue chain is Adenylate cyclase type 10 (1608 aa).

Guanylate cyclase domains are found at residues 42 to 179 (VLMF…RLAQ) and 293 to 418 (TIVF…ARMM). Mg(2+) contacts are provided by D47 and I48. 47–52 (DISGFT) lines the ATP pocket. Hydrogencarbonate is bound at residue K95. Position 99 (D99) interacts with Mg(2+). ATP-binding residues include D99 and K144. Hydrogencarbonate contacts are provided by V167, R176, and M337. Residues V406 and 412 to 416 (NIAAR) contribute to the ATP site.

This sequence belongs to the adenylyl cyclase class-4/guanylyl cyclase family. Mg(2+) serves as cofactor. The cofactor is Mn(2+). Cleavage may occur to generate the active 48 kDa form. Detected in testis (at protein level). Preferentially expressed in testis.

The protein resides in the cell membrane. It localises to the cytoplasm. Its subcellular location is the cytoskeleton. It is found in the perinuclear region. The protein localises to the nucleus. The protein resides in the cell projection. It localises to the cilium. Its subcellular location is the mitochondrion. It catalyses the reaction ATP = 3',5'-cyclic AMP + diphosphate. Its activity is regulated as follows. Activated by manganese or magnesium ions. In the presence of magnesium ions, the enzyme is activated by bicarbonate. Calcium mildly increases the enzyme activity, also in the presence of magnesium ions. Functionally, catalyzes the formation of the signaling molecule cAMP. May function as sensor that mediates responses to changes in cellular bicarbonate and CO(2) levels. Has a critical role in mammalian spermatogenesis by producing the cAMP which regulates cAMP-responsive nuclear factors indispensable for sperm maturation in the epididymis. Induces capacitation, the maturational process that sperm undergo prior to fertilization. Involved in ciliary beat regulation. This is Adenylate cyclase type 10 (Adcy10) from Rattus norvegicus (Rat).